The sequence spans 146 residues: Putative pre-16S rRNA nuclease (146 aa).

Belongs to the YqgF nuclease family.

Its subcellular location is the cytoplasm. In terms of biological role, could be a nuclease involved in processing of the 5'-end of pre-16S rRNA. The protein is Putative pre-16S rRNA nuclease of Burkholderia pseudomallei (strain 668).